The primary structure comprises 260 residues: MPNLLEKTRKITSILQRSVDSLDAELPYNAMASRLADIIDCNACIINGGGTLLGYAMKYKTNNDRVEEFFEAKQFPDSYVKAASRVYDTEANLPVENELTIFPIESKNTYPDGLTTIAPIYGGGMRLGSLIIWRNDKKFLDEDLILVEISSTVVGIQLLNLQTENLEETIRKQTAVNMAINTLSYSEMKAVAAILGELDGNEGRLTASVIADRIGITRSVIVNALRKLESAGIIESRSLGMKGTYLKVINEGIFDKLKEF.

A GAF domain region spans residues 1-159; sequence MPNLLEKTRK…SSTVVGIQLL (159 aa). A DNA-binding region (H-T-H motif) is located at residues 207-226; it reads ASVIADRIGITRSVIVNALR.

It belongs to the CodY family.

The protein localises to the cytoplasm. Its function is as follows. DNA-binding global transcriptional regulator which is involved in the adaptive response to starvation and acts by directly or indirectly controlling the expression of numerous genes in response to nutrient availability. During rapid exponential growth, CodY is highly active and represses genes whose products allow adaptation to nutrient depletion. This chain is Global transcriptional regulator CodY, found in Streptococcus uberis (strain ATCC BAA-854 / 0140J).